A 437-amino-acid chain; its full sequence is Na(+)/H(+) antiporter NhaA (437 aa).

11 helical membrane passes run 29–49 (TAGI…NTAW), 74–94 (LKHW…ALEL), 111–131 (LPVA…LLLV), 139–159 (GWGT…ALLG), 168–188 (LFLL…VAVG), 196–216 (VALG…LLGI), 229–249 (IWLA…ILGL), 307–327 (IALH…SNAG), 341–361 (IAIV…FSFL), 376–396 (WSLL…ALFI), and 411–431 (LGVL…LTLL).

The protein belongs to the NhaA Na(+)/H(+) (TC 2.A.33) antiporter family.

It localises to the cell inner membrane. It catalyses the reaction Na(+)(in) + 2 H(+)(out) = Na(+)(out) + 2 H(+)(in). Its function is as follows. Na(+)/H(+) antiporter that extrudes sodium in exchange for external protons. The sequence is that of Na(+)/H(+) antiporter NhaA from Rhizobium meliloti (strain 1021) (Ensifer meliloti).